Consider the following 146-residue polypeptide: MATQPATESVQCFGRKKTAVAVTHCKRGSGLIKLNGCPIELFQPEILRFKIFEPILLLGKHRFAGVNMRIRVNGGGHTSQVYAIRQSIAKALVAYYQKYVDEQSKKEIKDILVRYDRTLLVADPRRCEPKKFGGRGARSRYQKSYR.

It belongs to the universal ribosomal protein uS9 family.

In Arabidopsis thaliana (Mouse-ear cress), this protein is Small ribosomal subunit protein uS9z (RPS16A).